A 312-amino-acid chain; its full sequence is Phosphoribosylglycinamide formyltransferase, chloroplastic (312 aa).

The transit peptide at 1–73 directs the protein to the chloroplast; it reads MEAQQIISRF…EVCSSSWRIW (73 aa). Residue 109 to 111 coordinates N(1)-(5-phospho-beta-D-ribosyl)glycinamide; that stretch reads GSN. (6R)-10-formyltetrahydrofolate-binding positions include Lys162, 187–190, and Asn204; that span reads LKLI. His206 (proton donor) is an active-site residue. Asp247 provides a ligand contact to (6R)-10-formyltetrahydrofolate. Glu276 lines the N(1)-(5-phospho-beta-D-ribosyl)glycinamide pocket.

This sequence belongs to the GART family.

The protein resides in the plastid. Its subcellular location is the chloroplast. The enzyme catalyses N(1)-(5-phospho-beta-D-ribosyl)glycinamide + (6R)-10-formyltetrahydrofolate = N(2)-formyl-N(1)-(5-phospho-beta-D-ribosyl)glycinamide + (6S)-5,6,7,8-tetrahydrofolate + H(+). The protein operates within purine metabolism; IMP biosynthesis via de novo pathway; N(2)-formyl-N(1)-(5-phospho-D-ribosyl)glycinamide from N(1)-(5-phospho-D-ribosyl)glycinamide (10-formyl THF route): step 1/1. This is Phosphoribosylglycinamide formyltransferase, chloroplastic (PUR3) from Vigna unguiculata (Cowpea).